Consider the following 130-residue polypeptide: Protein MGF 360-1L (130 aa).

3 helical membrane passes run 4-24 (FLGF…NVNC), 75-95 (IIRH…CVAF), and 109-129 (LLGL…QPFP).

Belongs to the asfivirus MGF 110 family.

The protein localises to the host membrane. Functionally, plays a role in virus cell tropism, and may be required for efficient virus replication in macrophages. This Ornithodoros (relapsing fever ticks) protein is Protein MGF 360-1L.